The sequence spans 483 residues: tRNA (guanine(37)-N(1))-methyltransferase (483 aa).

The interval 1-24 is disordered; the sequence is MEEAATLQSLSISSSSPFPNNSSP. Positions 9-24 are enriched in low complexity; sequence SLSISSSSPFPNNSSP. S-adenosyl-L-methionine-binding positions include His252, 290-291, and Asn379; that span reads DL.

It belongs to the class I-like SAM-binding methyltransferase superfamily. TRM5/TYW2 family. Monomer.

The protein localises to the mitochondrion matrix. It localises to the nucleus. The protein resides in the cytoplasm. It carries out the reaction guanosine(37) in tRNA + S-adenosyl-L-methionine = N(1)-methylguanosine(37) in tRNA + S-adenosyl-L-homocysteine + H(+). Functionally, specifically methylates the N1 position of guanosine-37 in various cytoplasmic and mitochondrial tRNAs. Methylation is not dependent on the nature of the nucleoside 5' of the target nucleoside. This is the first step in the biosynthesis of wybutosine (yW), a modified base adjacent to the anticodon of tRNAs and required for accurate decoding. This is tRNA (guanine(37)-N(1))-methyltransferase from Ajellomyces capsulatus (strain G186AR / H82 / ATCC MYA-2454 / RMSCC 2432) (Darling's disease fungus).